Consider the following 185-residue polypeptide: Elongation factor P (185 aa).

It belongs to the elongation factor P family.

The protein resides in the cytoplasm. It participates in protein biosynthesis; polypeptide chain elongation. Functionally, involved in peptide bond synthesis. Stimulates efficient translation and peptide-bond synthesis on native or reconstituted 70S ribosomes in vitro. Probably functions indirectly by altering the affinity of the ribosome for aminoacyl-tRNA, thus increasing their reactivity as acceptors for peptidyl transferase. This is Elongation factor P from Synechococcus sp. (strain JA-3-3Ab) (Cyanobacteria bacterium Yellowstone A-Prime).